An 885-amino-acid chain; its full sequence is Glycerol-3-phosphate acyltransferase (885 aa).

The span at 1–17 (MPEQNPLPFPDGQPSPP) shows a compositional bias: pro residues. The disordered stretch occupies residues 1 to 26 (MPEQNPLPFPDGQPSPPSTAAADTGA). The HXXXXD motif signature appears at 362–367 (HRSHMD).

Belongs to the GPAT/DAPAT family.

The protein localises to the cell inner membrane. The catalysed reaction is sn-glycerol 3-phosphate + an acyl-CoA = a 1-acyl-sn-glycero-3-phosphate + CoA. It participates in phospholipid metabolism; CDP-diacylglycerol biosynthesis; CDP-diacylglycerol from sn-glycerol 3-phosphate: step 1/3. This Xanthomonas axonopodis pv. citri (strain 306) protein is Glycerol-3-phosphate acyltransferase.